The following is a 719-amino-acid chain: Polyphosphate kinase (719 aa).

ATP is bound at residue Asn47. 2 residues coordinate Mg(2+): Arg377 and Arg407. The Phosphohistidine intermediate role is filled by His437. Residues Tyr470, Arg566, and His594 each contribute to the ATP site.

This sequence belongs to the polyphosphate kinase 1 (PPK1) family. Requires Mg(2+) as cofactor. Post-translationally, an intermediate of this reaction is the autophosphorylated ppk in which a phosphate is covalently linked to a histidine residue through a N-P bond.

The enzyme catalyses [phosphate](n) + ATP = [phosphate](n+1) + ADP. Catalyzes the reversible transfer of the terminal phosphate of ATP to form a long-chain polyphosphate (polyP). The sequence is that of Polyphosphate kinase from Exiguobacterium sibiricum (strain DSM 17290 / CCUG 55495 / CIP 109462 / JCM 13490 / 255-15).